The following is a 240-amino-acid chain: Ribosomal RNA small subunit methyltransferase I (240 aa).

The protein belongs to the methyltransferase superfamily. RsmI family.

The protein localises to the cytoplasm. It carries out the reaction cytidine(1402) in 16S rRNA + S-adenosyl-L-methionine = 2'-O-methylcytidine(1402) in 16S rRNA + S-adenosyl-L-homocysteine + H(+). Its function is as follows. Catalyzes the 2'-O-methylation of the ribose of cytidine 1402 (C1402) in 16S rRNA. In Leptospira biflexa serovar Patoc (strain Patoc 1 / ATCC 23582 / Paris), this protein is Ribosomal RNA small subunit methyltransferase I.